The following is a 206-amino-acid chain: Small ribosomal subunit protein uS4 (206 aa).

Positions 29 to 52 (LDKRPYAPGQHGQRRGRGRPSDYS) are disordered. Residues 96-171 (RRLDNVVFRM…QKRRRVSPWV (76 aa)) enclose the S4 RNA-binding domain.

Belongs to the universal ribosomal protein uS4 family. As to quaternary structure, part of the 30S ribosomal subunit. Contacts protein S5. The interaction surface between S4 and S5 is involved in control of translational fidelity.

One of the primary rRNA binding proteins, it binds directly to 16S rRNA where it nucleates assembly of the body of the 30S subunit. Its function is as follows. With S5 and S12 plays an important role in translational accuracy. In Deinococcus deserti (strain DSM 17065 / CIP 109153 / LMG 22923 / VCD115), this protein is Small ribosomal subunit protein uS4.